The chain runs to 207 residues: Cytochrome c biogenesis ATP-binding export protein CcmA (207 aa).

The region spanning 2-204 (LEVKNLTAIR…NPKLRKIRLG (203 aa)) is the ABC transporter domain. 34–41 (GRNGTGKT) lines the ATP pocket.

The protein belongs to the ABC transporter superfamily. CcmA exporter (TC 3.A.1.107) family. The complex is composed of two ATP-binding proteins (CcmA) and two transmembrane proteins (CcmB).

Its subcellular location is the cell inner membrane. The catalysed reaction is heme b(in) + ATP + H2O = heme b(out) + ADP + phosphate + H(+). In terms of biological role, part of the ABC transporter complex CcmAB involved in the biogenesis of c-type cytochromes; once thought to export heme, this seems not to be the case, but its exact role is uncertain. Responsible for energy coupling to the transport system. In Vibrio cholerae serotype O1 (strain ATCC 39315 / El Tor Inaba N16961), this protein is Cytochrome c biogenesis ATP-binding export protein CcmA.